A 128-amino-acid polypeptide reads, in one-letter code: uncharacterized protein (128 aa).

This is an uncharacterized protein from Gallus gallus (Chicken).